Reading from the N-terminus, the 178-residue chain is Riboflavin kinase (178 aa).

Residues T39 and N41 each coordinate Mg(2+). E116 functions as the Nucleophile in the catalytic mechanism.

This sequence belongs to the flavokinase family. Zn(2+) serves as cofactor. The cofactor is Mg(2+).

It carries out the reaction riboflavin + ATP = FMN + ADP + H(+). It participates in cofactor biosynthesis; FMN biosynthesis; FMN from riboflavin (ATP route): step 1/1. Functionally, catalyzes the phosphorylation of riboflavin (vitamin B2) to form flavin mononucleotide (FMN) coenzyme. In Scheffersomyces stipitis (strain ATCC 58785 / CBS 6054 / NBRC 10063 / NRRL Y-11545) (Yeast), this protein is Riboflavin kinase (FMN1).